The primary structure comprises 428 residues: Magnesium transporter MRS2-C (428 aa).

2 helical membrane passes run 364 to 384 (LLLT…GVFG) and 400 to 420 (WTLV…IWYF). Positions 384–386 (GMN) match the Required for magnesium transport activity motif.

Belongs to the CorA metal ion transporter (MIT) (TC 1.A.35.5) family.

The protein localises to the membrane. Its function is as follows. Magnesium transporter that may mediate the influx of magnesium. This chain is Magnesium transporter MRS2-C, found in Oryza sativa subsp. indica (Rice).